A 151-amino-acid polypeptide reads, in one-letter code: Protein Turandot Z (151 aa).

Positions 1 to 23 are cleaved as a signal peptide; sequence MSRLIHLSFVLALLACLTGPISA.

This sequence belongs to the Turandot family.

It is found in the secreted. Its function is as follows. A humoral factor that may play a role in stress tolerance. The protein is Protein Turandot Z of Drosophila pseudoobscura pseudoobscura (Fruit fly).